A 157-amino-acid polypeptide reads, in one-letter code: Cyclic pyranopterin monophosphate synthase (157 aa).

Residues 73 to 75 (LCH) and 110 to 111 (ME) each bind substrate. Aspartate 125 is a catalytic residue.

The protein belongs to the MoaC family. In terms of assembly, homohexamer; trimer of dimers.

The enzyme catalyses (8S)-3',8-cyclo-7,8-dihydroguanosine 5'-triphosphate = cyclic pyranopterin phosphate + diphosphate. It functions in the pathway cofactor biosynthesis; molybdopterin biosynthesis. In terms of biological role, catalyzes the conversion of (8S)-3',8-cyclo-7,8-dihydroguanosine 5'-triphosphate to cyclic pyranopterin monophosphate (cPMP). This chain is Cyclic pyranopterin monophosphate synthase, found in Pseudomonas fluorescens (strain SBW25).